Consider the following 122-residue polypeptide: Large ribosomal subunit protein uL14 (122 aa).

This sequence belongs to the universal ribosomal protein uL14 family. As to quaternary structure, part of the 50S ribosomal subunit. Forms a cluster with proteins L3 and L19. In the 70S ribosome, L14 and L19 interact and together make contacts with the 16S rRNA in bridges B5 and B8.

Binds to 23S rRNA. Forms part of two intersubunit bridges in the 70S ribosome. In Clostridium tetani (strain Massachusetts / E88), this protein is Large ribosomal subunit protein uL14.